Here is a 211-residue protein sequence, read N- to C-terminus: NADH-quinone oxidoreductase subunit I (211 aa).

The interval 1–27 (MANTDRPALPHKRAVPPSRADSGPRRR) is disordered. 4Fe-4S ferredoxin-type domains follow at residues 71–101 (LNRY…VEGA) and 117–146 (RVYQ…MTYD). Positions 81, 84, 87, 91, 126, 129, 132, and 136 each coordinate [4Fe-4S] cluster.

It belongs to the complex I 23 kDa subunit family. NDH-1 is composed of 14 different subunits. Subunits NuoA, H, J, K, L, M, N constitute the membrane sector of the complex. [4Fe-4S] cluster serves as cofactor.

Its subcellular location is the cell membrane. The catalysed reaction is a quinone + NADH + 5 H(+)(in) = a quinol + NAD(+) + 4 H(+)(out). Its function is as follows. NDH-1 shuttles electrons from NADH, via FMN and iron-sulfur (Fe-S) centers, to quinones in the respiratory chain. The immediate electron acceptor for the enzyme in this species is believed to be menaquinone. Couples the redox reaction to proton translocation (for every two electrons transferred, four hydrogen ions are translocated across the cytoplasmic membrane), and thus conserves the redox energy in a proton gradient. The sequence is that of NADH-quinone oxidoreductase subunit I from Mycobacterium tuberculosis (strain ATCC 25177 / H37Ra).